The primary structure comprises 503 residues: Arabinose import ATP-binding protein AraG (503 aa).

ABC transporter domains lie at leucine 5 to arginine 240 and leucine 253 to glycine 497. Glycine 37–serine 44 lines the ATP pocket.

It belongs to the ABC transporter superfamily. Arabinose importer (TC 3.A.1.2.2) family. As to quaternary structure, the complex is composed of two ATP-binding proteins (AraG), two transmembrane proteins (AraH) and a solute-binding protein (AraF).

Its subcellular location is the cell inner membrane. The catalysed reaction is L-arabinose(out) + ATP + H2O = L-arabinose(in) + ADP + phosphate + H(+). Its function is as follows. Part of the ABC transporter complex AraFGH involved in arabinose import. Responsible for energy coupling to the transport system. This Burkholderia pseudomallei (strain 1710b) protein is Arabinose import ATP-binding protein AraG.